A 592-amino-acid chain; its full sequence is BRCA1-associated protein (592 aa).

Position 52 is a phosphoserine (Ser-52). A disordered region spans residues 78–124 (KSNPDELKTTVEERKSSEASPTAQRSKDHSKECINAAPDSPSKQLPD). The segment covering 80 to 94 (NPDELKTTVEERKSS) has biased composition (basic and acidic residues). Residues Ser-97, Ser-117, and Ser-119 each carry the phosphoserine modification. The RING-type zinc finger occupies 264-304 (CTVCLERMDESVNGILTTLCNHSFHSQCLQRWDDTTCPVCR). The UBP-type; degenerate zinc finger occupies 301 to 393 (PVCRYCQTPE…GKIVQYECEG (93 aa)). Zn(2+)-binding residues include Cys-317, Cys-320, Cys-329, Cys-332, Cys-337, His-344, His-348, and His-354. Positions 429 to 537 (RIEKDTAEEI…EIQEQLRDVM (109 aa)) form a coiled coil. Positions 565 to 592 (AMASASSPASSGGSGKLPSRKGRSKRGK) are disordered. A compositionally biased stretch (basic residues) spans 582–592 (PSRKGRSKRGK).

In terms of assembly, interacts with the nuclear localization signal of BRCA1 and with the N-terminal of KSR1. The C-terminal portion of BCRA1 interacts with DDB1. As to expression, expressed in breast epithelial cell lines.

Its subcellular location is the cytoplasm. It catalyses the reaction S-ubiquitinyl-[E2 ubiquitin-conjugating enzyme]-L-cysteine + [acceptor protein]-L-lysine = [E2 ubiquitin-conjugating enzyme]-L-cysteine + N(6)-ubiquitinyl-[acceptor protein]-L-lysine.. It participates in protein modification; protein ubiquitination. Its function is as follows. Negatively regulates MAP kinase activation by limiting the formation of Raf/MEK complexes probably by inactivation of the KSR1 scaffold protein. Also acts as a Ras responsive E3 ubiquitin ligase that, on activation of Ras, is modified by auto-polyubiquitination resulting in the release of inhibition of Raf/MEK complex formation. May also act as a cytoplasmic retention protein with a role in regulating nuclear transport. In Homo sapiens (Human), this protein is BRCA1-associated protein.